Reading from the N-terminus, the 530-residue chain is TNF receptor-associated factor 6 (530 aa).

Positions 1–362 (MSLLNCENSC…EAQQCNGIYI (362 aa)) are interaction with TAX1BP1. The segment at 70-109 (CPICLMALREAVQTPCGHRFCKACITKSIRDAGHKCPVDN) adopts an RING-type; degenerate zinc-finger fold. Residue lysine 124 forms a Glycyl lysine isopeptide (Lys-Gly) (interchain with G-Cter in SUMO); alternate linkage. Lysine 124 participates in a covalent cross-link: Glycyl lysine isopeptide (Lys-Gly) (interchain with G-Cter in ubiquitin); alternate. Residue lysine 142 forms a Glycyl lysine isopeptide (Lys-Gly) (interchain with G-Cter in SUMO) linkage. 2 consecutive TRAF-type zinc fingers follow at residues 150 to 202 (DHQV…EEKE) and 203 to 259 (IHDQ…NHLA). The stretch at 302–356 (NYEETVKQLEGRLVRQDHQIRELTAKMETQSMHVSELKRTIRSLEDKVAEMEAQQ) forms a coiled coil. A Glycyl lysine isopeptide (Lys-Gly) (interchain with G-Cter in ubiquitin) cross-link involves residue lysine 327. One can recognise an MATH domain in the interval 358-507 (NGIYIWKIGN…DDTLLVRCEV (150 aa)). The interaction with TANK stretch occupies residues 363-530 (WKIGNFGMHL…FQPRSTDAGV (168 aa)). Lysine 461 is covalently cross-linked (Glycyl lysine isopeptide (Lys-Gly) (interchain with G-Cter in SUMO)).

Belongs to the TNF receptor-associated factor family. A subfamily. In terms of assembly, homotrimer. Homooligomer. N-terminal region is dimeric while C-terminal region is trimeric; maybe providing a mode of oligomerization. Upon IL1B treatment, forms a complex with PELI1, IRAK1, IRAK4 and MYD88; this complex recruits MAP3K7/TAK1, TAB1 and TAB2 to mediate NF-kappa-B activation. Direct binding of SMAD6 to PELI1 prevents the complex formation and hence negatively regulates IL1R-TLR signaling and eventually NF-kappa-B-mediated gene expression. Binds to TNFRSF5/CD40 and TNFRSF11A/RANK. Associates with NGFR, TNFRSF17, IRAK2, IRAK3, RIPK2, MAP3K1, MAP3K5, MAP3K14, CSK, TRAF, TRAF-interacting protein TRIP and TNF receptor associated protein TDP2. Interacts with IL17R. Interacts with SQSTM1 bridging NTRK1 and NGFR. Forms a ternary complex with SQSTM1 and PRKCZ. Interacts with PELI2 and PELI3. Binds UBE2V1. Interacts with TAX1BP1; this interaction mediates deubiquitination of TRAF6 and inhibition of NF-kappa-B activation. Interacts with ZNF675. Interacts with ARRB1 and ARRB2. Interacts with MAP3K7 and TAB1/MAP3K7IP1; during IL-1 signaling. Interacts with UBE2N. Interacts with TGFBR1, HDAC1 and RANGAP1. Interacts with AKT1, AKT2 and AKT3. Interacts (via TRAF domains) with NUMBL (via C-terminal). Interacts with RBCK1. Interacts with LIMD1 (via LIM domains). Interacts with RSAD2/viperin. Interacts (via C-terminus) with EIF2AK2/PKR (via the kinase catalytic domain). Interacts with ZFAND5. Interacts with IL1RL1. Interacts with TRAFD1. Interacts with AJUBA. Interacts with MAVS/IPS1. Interacts (via TRAF domains) with DYNC2I2 (via WD domains). Interacts with IFIT3 (via N-terminus). Interacts with TICAM2. Interacts with CARD14. Interacts with CD40 and MAP3K8; the interaction is required for ERK activation. Interacts with TICAM1 and this interaction is enhanced in the presence of WDFY1. Interacts with TANK; this interaction increases in response to DNA damage. Interacts with USP10; this interaction increases in response to DNA damage. Interacts with ZC3H12A; this interaction increases in response to DNA damage and is stimulated by TANK. Interacts with WDFY3. Interacts with TRIM13. Interacts with GPS2. Interacts (via C-terminus) with SASH1. Interacts with LRRC19. Interacts with IL17RA and TRAF3IP2. Interacts with TOMM70. Interacts with AMBRA1; interaction is required to mediate 'Lys-63'-linked ubiquitination of ULK1. Interacts with CRBN; this interaction inhibits TLR4-mediated signaling by preventing TRAF6-mediated ubiquitination of ECSIT. In terms of processing, sumoylated on Lys-124, Lys-142 and Lys-461 with SUMO1. Polyubiquitinated on Lys-124 by TRAF3IP2; after cell stimulation with IL17A. Polyubiquitinated; after cell stimulation with IL1B or TGFB. This ligand-induced cell stimulation leads to dimerization/oligomerization of TRAF6 molecules, followed by auto-ubiquitination which involves UBE2N and UBE2V1 and leads to TRAF6 activation. This 'Lys-63' site-specific poly-ubiquitination appears to be associated with the activation of signaling molecules. Endogenous autoubiquitination occurs only for the cytoplasmic form. Deubiquitinated by USP10 in a TANK-dependent manner, leading to the negative regulation of NF-kappa-B signaling upon DNA damage. LRRC19 induces 'Lys-63' ubiquitination. Ubiquitinated at Lys-327 by the SCF(FBXL2) complex, leading to its degradation by the proteasome.

The protein resides in the cytoplasm. The protein localises to the cell cortex. It localises to the nucleus. Its subcellular location is the lipid droplet. The enzyme catalyses S-ubiquitinyl-[E2 ubiquitin-conjugating enzyme]-L-cysteine + [acceptor protein]-L-lysine = [E2 ubiquitin-conjugating enzyme]-L-cysteine + N(6)-ubiquitinyl-[acceptor protein]-L-lysine.. The protein operates within protein modification; protein ubiquitination. Its function is as follows. E3 ubiquitin ligase that, together with UBE2N and UBE2V1, mediates the synthesis of 'Lys-63'-linked-polyubiquitin chains conjugated to proteins, such as ECSIT, IKBKG, IRAK1, AKT1 and AKT2. Also mediates ubiquitination of free/unanchored polyubiquitin chain that leads to MAP3K7 activation. Leads to the activation of NF-kappa-B and JUN. Seems to also play a role in dendritic cells (DCs) maturation and/or activation. Represses c-Myb-mediated transactivation, in B-lymphocytes. Adapter protein that seems to play a role in signal transduction initiated via TNF receptor, IL-1 receptor and IL-17 receptor. Regulates osteoclast differentiation by mediating the activation of adapter protein complex 1 (AP-1) and NF-kappa-B, in response to RANK-L stimulation. Together with MAP3K8, mediates CD40 signals that activate ERK in B-cells and macrophages, and thus may play a role in the regulation of immunoglobulin production. Acts as a regulator of the JNK and NF-kappa-B signaling pathways by initiating assembly of heterotypic 'Lys-63'-/'Lys-48'-linked branched ubiquitin chains that are then recognized by TAB2: TRAF6 catalyzes initial 'Lys-63'-linked-polyubiquitin chains that are then branched via 'Lys-48'-linked polyubiquitin by HUWE1. 'Lys-63'-/'Lys-48'-linked branched ubiquitin chains protect 'Lys-63'-linkages from CYLD deubiquitination. Also participates in the TCR signaling by ubiquitinating LAT. The chain is TNF receptor-associated factor 6 (Traf6) from Rattus norvegicus (Rat).